A 272-amino-acid polypeptide reads, in one-letter code: Tryptophan synthase alpha chain (272 aa).

Residues E49 and D60 each act as proton acceptor in the active site.

Belongs to the TrpA family. Tetramer of two alpha and two beta chains.

It catalyses the reaction (1S,2R)-1-C-(indol-3-yl)glycerol 3-phosphate + L-serine = D-glyceraldehyde 3-phosphate + L-tryptophan + H2O. Its pathway is amino-acid biosynthesis; L-tryptophan biosynthesis; L-tryptophan from chorismate: step 5/5. The alpha subunit is responsible for the aldol cleavage of indoleglycerol phosphate to indole and glyceraldehyde 3-phosphate. In Acidithiobacillus ferrooxidans (strain ATCC 23270 / DSM 14882 / CIP 104768 / NCIMB 8455) (Ferrobacillus ferrooxidans (strain ATCC 23270)), this protein is Tryptophan synthase alpha chain.